A 94-amino-acid chain; its full sequence is Long neurotoxin LNTX37 (94 aa).

Positions 1 to 21 are cleaved as a signal peptide; the sequence is MKTLLLTLVVVTIMCLDLGYT. 5 disulfides stabilise this stretch: cysteine 24–cysteine 43, cysteine 36–cysteine 64, cysteine 49–cysteine 53, cysteine 68–cysteine 79, and cysteine 80–cysteine 85.

Belongs to the three-finger toxin family. Long-chain subfamily. Type II alpha-neurotoxin sub-subfamily. Expressed by the venom gland.

The protein localises to the secreted. Functionally, binds with high affinity to muscular (alpha-1/CHRNA1) and neuronal (alpha-7/CHRNA7) nicotinic acetylcholine receptor (nAChR) and inhibits acetylcholine from binding to the receptor, thereby impairing neuromuscular and neuronal transmission. This chain is Long neurotoxin LNTX37, found in Ophiophagus hannah (King cobra).